We begin with the raw amino-acid sequence, 150 residues long: MCWLRAWSHILLPVFLSVALIQLIFNLSDHKTKTHHHWKRKIEAKYVEKECAQKETCPVCTRDKRCIWCREEKVCKKYCFPYSDCKFNSIFWANCNVDLFGIVMLILIVILALAFLWYCLAYYFYMQQHMALYARHGQVPVYNWDAPGDW.

The N-terminal stretch at 1-19 (MCWLRAWSHILLPVFLSVA) is a signal peptide. Residues 20 to 98 (LIQLIFNLSD…SIFWANCNVD (79 aa)) lie on the Extracellular side of the membrane. The N-linked (GlcNAc...) asparagine glycan is linked to asparagine 26. A helical transmembrane segment spans residues 99–119 (LFGIVMLILIVILALAFLWYC). The Cytoplasmic portion of the chain corresponds to 120-150 (LAYYFYMQQHMALYARHGQVPVYNWDAPGDW).

The protein localises to the membrane. The sequence is that of PTTG1IP family member 2 from Mus musculus (Mouse).